Reading from the N-terminus, the 123-residue chain is Large ribosomal subunit protein uL14 (123 aa).

This sequence belongs to the universal ribosomal protein uL14 family. In terms of assembly, part of the 50S ribosomal subunit. Forms a cluster with proteins L3 and L19. In the 70S ribosome, L14 and L19 interact and together make contacts with the 16S rRNA in bridges B5 and B8.

Binds to 23S rRNA. Forms part of two intersubunit bridges in the 70S ribosome. The sequence is that of Large ribosomal subunit protein uL14 from Photorhabdus laumondii subsp. laumondii (strain DSM 15139 / CIP 105565 / TT01) (Photorhabdus luminescens subsp. laumondii).